A 51-amino-acid chain; its full sequence is Large ribosomal subunit protein eL39 (51 aa).

This sequence belongs to the eukaryotic ribosomal protein eL39 family.

This Methanobrevibacter smithii (strain ATCC 35061 / DSM 861 / OCM 144 / PS) protein is Large ribosomal subunit protein eL39.